The chain runs to 188 residues: Large ribosomal subunit protein eL18 (188 aa).

The segment at 151–188 (HFGPAPGVPHSHTKPLVRSKGRKFERARGRRKSCGYKK) is disordered. 2 stretches are compositionally biased toward basic residues: residues 161–171 (SHTKPLVRSKG) and 178–188 (RGRRKSCGYKK).

Belongs to the eukaryotic ribosomal protein eL18 family.

The protein resides in the cytoplasm. This chain is Large ribosomal subunit protein eL18 (RpL18), found in Lysiphlebus testaceipes (Greenbugs aphid parastoid).